The chain runs to 457 residues: Multidrug resistance protein MdtK (457 aa).

The next 12 membrane-spanning stretches (helical) occupy residues 11-31 (LLAL…MGFV), 53-73 (IWLP…PVIA), 93-113 (WLAS…GYII), 127-147 (AVGY…FQVA), 160-180 (GMVM…IFIY), 188-208 (LGGI…FIAM), 243-263 (LPIA…ALLV), 276-296 (IALN…AAVT), 314-334 (AART…IFTV), 357-377 (LMLL…GSGI), 387-407 (IFFI…YILA), and 418-438 (PAGF…LMML).

The protein belongs to the multi antimicrobial extrusion (MATE) (TC 2.A.66.1) family. MdtK subfamily.

It localises to the cell inner membrane. Functionally, multidrug efflux pump that functions probably as a Na(+)/drug antiporter. The protein is Multidrug resistance protein MdtK of Salmonella arizonae (strain ATCC BAA-731 / CDC346-86 / RSK2980).